A 366-amino-acid polypeptide reads, in one-letter code: Probable quinol oxidase subunit 2 (366 aa).

The first 19 residues, 1–19 (MSKFKSLLLLFGTLILLSG), serve as a signal peptide directing secretion. Cys-20 is lipidated: N-palmitoyl cysteine. The S-diacylglycerol cysteine moiety is linked to residue Cys-20. Transmembrane regions (helical) follow at residues 38–58 (FLIL…LGMF) and 80–100 (AIIE…LAIP). The tract at residues 330–366 (EPYNNEFKKDESKNAKEMKKISKDAQDQDNDDHGGGH) is disordered. Over residues 335 to 366 (EFKKDESKNAKEMKKISKDAQDQDNDDHGGGH) the composition is skewed to basic and acidic residues.

Belongs to the cytochrome c oxidase subunit 2 family.

Its subcellular location is the cell membrane. It catalyses the reaction 2 a quinol + O2 = 2 a quinone + 2 H2O. Catalyzes quinol oxidation with the concomitant reduction of oxygen to water. Subunit II transfers the electrons from a quinol to the binuclear center of the catalytic subunit I. The sequence is that of Probable quinol oxidase subunit 2 (qoxA) from Staphylococcus aureus (strain bovine RF122 / ET3-1).